Here is a 414-residue protein sequence, read N- to C-terminus: L-cysteine:1D-myo-inositol 2-amino-2-deoxy-alpha-D-glucopyranoside ligase (414 aa).

Cys44 provides a ligand contact to Zn(2+). Residues 44–47, Thr59, and 82–84 contribute to the L-cysteinyl-5'-AMP site; these read CGIT and NIT. A 'HIGH' region motif is present at residues 46-56; sequence ITPYDSTHLGH. The 'ERGGDP' region motif lies at 188–193; the sequence is ERGGDP. Trp228 is a binding site for L-cysteinyl-5'-AMP. Zn(2+) is bound at residue Cys232. 250 to 252 serves as a coordination point for L-cysteinyl-5'-AMP; sequence GSD. His257 serves as a coordination point for Zn(2+). L-cysteinyl-5'-AMP is bound at residue Ile284. Residues 290-294 carry the 'KMSKS' region motif; that stretch reads KMSKS.

The protein belongs to the class-I aminoacyl-tRNA synthetase family. MshC subfamily. Monomer. It depends on Zn(2+) as a cofactor.

It catalyses the reaction 1D-myo-inositol 2-amino-2-deoxy-alpha-D-glucopyranoside + L-cysteine + ATP = 1D-myo-inositol 2-(L-cysteinylamino)-2-deoxy-alpha-D-glucopyranoside + AMP + diphosphate + H(+). Its function is as follows. Catalyzes the ATP-dependent condensation of GlcN-Ins and L-cysteine to form L-Cys-GlcN-Ins. The polypeptide is L-cysteine:1D-myo-inositol 2-amino-2-deoxy-alpha-D-glucopyranoside ligase (Corynebacterium aurimucosum (strain ATCC 700975 / DSM 44827 / CIP 107346 / CN-1) (Corynebacterium nigricans)).